The primary structure comprises 122 residues: uncharacterized protein (122 aa).

The N-terminal stretch at 1–18 is a signal peptide; the sequence is MYSMAFLASSGLVANSSA. The N-linked (GlcNAc...) asparagine glycan is linked to N15.

This is an uncharacterized protein from Saccharomyces cerevisiae (strain ATCC 204508 / S288c) (Baker's yeast).